We begin with the raw amino-acid sequence, 134 residues long: Interleukin-4 (134 aa).

The signal sequence occupies residues 1–23 (MGLTYQLLPALVCLLACTSFIQG). 2 disulfide bridges follow: C24-C133 and C48-C88. N38 is a glycosylation site (N-linked (GlcNAc...) asparagine). Residue N101 is glycosylated (N-linked (GlcNAc...) asparagine).

Belongs to the IL-4/IL-13 family.

It localises to the secreted. Its function is as follows. Participates in at least several B-cell activation processes as well as of other cell types. It is a costimulator of DNA-synthesis. It induces the expression of class II MHC molecules on resting B-cells. It enhances both secretion and cell surface expression of IgE and IgG1. It also regulates the expression of the low affinity Fc receptor for IgE (CD23) on both lymphocytes and monocytes. Positively regulates IL31RA expression in macrophages. Stimulates autophagy in dendritic cells by interfering with mTORC1 signaling and through the induction of RUFY4. This Equus caballus (Horse) protein is Interleukin-4 (IL4).